Here is a 383-residue protein sequence, read N- to C-terminus: Glucose-1-phosphate adenylyltransferase (383 aa).

Residues Tyr100, Gly165, 180–181, and Ser191 each bind alpha-D-glucose 1-phosphate; that span reads EK.

The protein belongs to the bacterial/plant glucose-1-phosphate adenylyltransferase family. In terms of assembly, homotetramer.

The enzyme catalyses alpha-D-glucose 1-phosphate + ATP + H(+) = ADP-alpha-D-glucose + diphosphate. Its pathway is glycan biosynthesis; glycogen biosynthesis. Functionally, involved in the biosynthesis of ADP-glucose, a building block required for the elongation reactions to produce glycogen. Catalyzes the reaction between ATP and alpha-D-glucose 1-phosphate (G1P) to produce pyrophosphate and ADP-Glc. The polypeptide is Glucose-1-phosphate adenylyltransferase (Clostridium kluyveri (strain ATCC 8527 / DSM 555 / NBRC 12016 / NCIMB 10680 / K1)).